The primary structure comprises 193 residues: Der GTPase-activating protein YihI (193 aa).

The segment covering Met-1 to Gly-12 has biased composition (basic residues). Disordered regions lie at residues Met-1–Met-91 and Ile-143–Lys-193. The span at Lys-13–Glu-26 shows a compositional bias: basic and acidic residues. Over residues Arg-27–Leu-36 the composition is skewed to basic residues. The span at Ser-40–Lys-54 shows a compositional bias: polar residues. Acidic residues predominate over residues Asp-145–Ser-160. The segment covering Pro-184–Lys-193 has biased composition (basic and acidic residues).

Belongs to the YihI family. In terms of assembly, interacts with Der.

Its function is as follows. A GTPase-activating protein (GAP) that modifies Der/EngA GTPase function. May play a role in ribosome biogenesis. The polypeptide is Der GTPase-activating protein YihI (Aeromonas salmonicida (strain A449)).